A 301-amino-acid polypeptide reads, in one-letter code: GTPase Era (301 aa).

In terms of domain architecture, Era-type G spans 7 to 175 (YCGFIAIVGR…AAIVRKHLPE (169 aa)). Positions 15-22 (GRPNVGKS) are G1. GTP is bound at residue 15–22 (GRPNVGKS). Residues 41–45 (QTTRH) are G2. The segment at 62–65 (DTPG) is G3. GTP-binding positions include 62-66 (DTPGL) and 124-127 (NKVD). The G4 stretch occupies residues 124–127 (NKVD). Residues 154–156 (ISA) are G5. Residues 206–283 (LGAELPYSVT…HLELWVKVKS (78 aa)) form the KH type-2 domain.

Belongs to the TRAFAC class TrmE-Era-EngA-EngB-Septin-like GTPase superfamily. Era GTPase family. Monomer.

Its subcellular location is the cytoplasm. The protein resides in the cell inner membrane. Functionally, an essential GTPase that binds both GDP and GTP, with rapid nucleotide exchange. Plays a role in 16S rRNA processing and 30S ribosomal subunit biogenesis and possibly also in cell cycle regulation and energy metabolism. The chain is GTPase Era from Cronobacter sakazakii (strain ATCC BAA-894) (Enterobacter sakazakii).